The sequence spans 127 residues: Mediator of RNA polymerase II transcription subunit 9 (127 aa).

Residues 95–119 (QKEQEIEAKKRVHRQLRQRVEEIAG) adopt a coiled-coil conformation.

The protein belongs to the Mediator complex subunit 9 family. In terms of assembly, component of the Mediator complex.

It localises to the nucleus. In terms of biological role, component of the Mediator complex, a coactivator involved in the regulated transcription of nearly all RNA polymerase II-dependent genes. Mediator functions as a bridge to convey information from gene-specific regulatory proteins to the basal RNA polymerase II transcription machinery. Mediator is recruited to promoters by direct interactions with regulatory proteins and serves as a scaffold for the assembly of a functional preinitiation complex with RNA polymerase II and the general transcription factors. The polypeptide is Mediator of RNA polymerase II transcription subunit 9 (CSE2) (Eremothecium gossypii (strain ATCC 10895 / CBS 109.51 / FGSC 9923 / NRRL Y-1056) (Yeast)).